The sequence spans 279 residues: Large ribosomal subunit protein uL2 (279 aa).

Disordered regions lie at residues 1-43 and 207-279; these read MGIK…TAGR and KAGR…PGKH. The segment covering 8-22 has biased composition (polar residues); sequence PTTNGRRNMTASDFS. Basic and acidic residues predominate over residues 23 to 33; sequence EITKTKPEKSL. The span at 34–43 shows a compositional bias: polar residues; sequence LDSQSHTAGR. 2 stretches are compositionally biased toward basic residues: residues 209-219 and 254-279; these read GRTRWQGKRPT and TLGK…PGKH.

This sequence belongs to the universal ribosomal protein uL2 family. Part of the 50S ribosomal subunit. Forms a bridge to the 30S subunit in the 70S ribosome.

One of the primary rRNA binding proteins. Required for association of the 30S and 50S subunits to form the 70S ribosome, for tRNA binding and peptide bond formation. It has been suggested to have peptidyltransferase activity; this is somewhat controversial. Makes several contacts with the 16S rRNA in the 70S ribosome. The chain is Large ribosomal subunit protein uL2 from Lactiplantibacillus plantarum (strain ATCC BAA-793 / NCIMB 8826 / WCFS1) (Lactobacillus plantarum).